A 355-amino-acid chain; its full sequence is 3-isopropylmalate dehydrogenase (355 aa).

Substrate contacts are provided by Arg-90, Arg-100, Arg-128, and Asp-222. Asp-222, Asp-246, and Asp-250 together coordinate Mg(2+). Residue 280–292 coordinates NAD(+); that stretch reads GSAPDIAGKGVAN.

It belongs to the isocitrate and isopropylmalate dehydrogenases family. LeuB type 1 subfamily. Homodimer. The cofactor is Mg(2+). Mn(2+) is required as a cofactor.

The protein resides in the cytoplasm. It catalyses the reaction (2R,3S)-3-isopropylmalate + NAD(+) = 4-methyl-2-oxopentanoate + CO2 + NADH. It participates in amino-acid biosynthesis; L-leucine biosynthesis; L-leucine from 3-methyl-2-oxobutanoate: step 3/4. Catalyzes the oxidation of 3-carboxy-2-hydroxy-4-methylpentanoate (3-isopropylmalate) to 3-carboxy-4-methyl-2-oxopentanoate. The product decarboxylates to 4-methyl-2 oxopentanoate. The sequence is that of 3-isopropylmalate dehydrogenase from Cupriavidus metallidurans (strain ATCC 43123 / DSM 2839 / NBRC 102507 / CH34) (Ralstonia metallidurans).